Here is a 639-residue protein sequence, read N- to C-terminus: Developmental regulatory protein wetA (639 aa).

Disordered regions lie at residues 65–97 (MDPS…EFDF), 206–369 (TTMR…SAAS), 418–552 (GLLI…SADE), and 587–613 (LMTG…RRRR). Residues 69 to 78 (HHHHHPHHHA) show a composition bias toward basic residues. 2 stretches are compositionally biased toward polar residues: residues 81-90 (ESSTTSSGVS) and 214-226 (VSQT…SPSM). Over residues 246 to 255 (RGRRAHRAHT) the composition is skewed to basic residues. 3 stretches are compositionally biased toward low complexity: residues 256–275 (QHAL…QAHQ), 346–369 (QQQW…SAAS), and 506–526 (HSSG…RVSV).

Belongs to the wetA family.

Functionally, brlA, abaA and wetA are pivotal regulators of conidiophore development and conidium maturation. They act individually and together to regulate their own expression and that of numerous other sporulation-specific genes. Acts as a crucial regulator of both conidiation capacity and conidial quality. Plays a role in virulence. The polypeptide is Developmental regulatory protein wetA (Beauveria bassiana (strain ARSEF 2860) (White muscardine disease fungus)).